The sequence spans 3313 residues: PHD finger protein rhinoceros (3313 aa).

Residues 1–16 are compositionally biased toward basic residues; sequence MSQRGKRGNQHHHQSH. Residues 1–136 are disordered; the sequence is MSQRGKRGNQ…QGASTSSSWQ (136 aa). Low complexity-rich tracts occupy residues 42 to 71 and 100 to 134; these read PPNG…ATGG and LGAA…TSSS. A PHD-type 1 zinc finger spans residues 323-373; it reads NVICDVCRSPDSEEANEMVFCDNCNICVHQACYGITAIPSGQWLCRTCSMG. The C2HC pre-PHD-type zinc-finger motif lies at 375–409; it reads TPDCVLCPNKAGAMKSNKSGKHWAHVSCALWIPEV. A PHD-type 2; degenerate zinc finger spans residues 433 to 487; the sequence is LVCVLCRKRVGSCIQCSKHSMSKGKKENAGGASGGGSASVTSSMHKANKYATGTG. Disordered regions lie at residues 453-526, 708-1076, 1107-1842, 1961-2033, 2104-2136, 2145-2164, 2219-2252, 2353-2374, 2398-2514, 2563-2587, 2647-2679, 2827-2871, 2888-2954, 2978-2998, 3017-3077, 3144-3233, and 3259-3313; these read MSKG…ARAQ, LQSG…TKAA, KEAK…PPSH, AQKE…TMGN, PVTA…RMQR, ARRS…PPAT, AAPQ…FNGG, PAYP…PAHP, VAAK…PPPM, TTRG…LHPV, ATGT…QPPA, SCGL…SSSR, LAGA…IKIR, YEMT…YSTP, DFDK…SATT, KAEK…SLPE, and YENS…CEVR. Positions 512-526 are enriched in basic and acidic residues; that stretch reads KNDMTSEERNQARAQ. A compositionally biased stretch (polar residues) spans 735–749; that stretch reads KKLNNGAITSRTSSP. Residues 760–772 show a composition bias toward low complexity; that stretch reads STSTSTATATTAA. A compositionally biased stretch (polar residues) spans 792 to 802; the sequence is GAATGTSTHNK. Low complexity-rich tracts occupy residues 803-861 and 894-912; these read TQSQ…ASGI and EAAA…ATSS. The span at 919-934 shows a compositional bias: basic and acidic residues; sequence QQRRRQEPERERDGRG. Residues 942-955 show a composition bias toward polar residues; it reads TVPNRTQPTKSKQS. The span at 956-972 shows a compositional bias: low complexity; it reads TQADAGSGAGTGAAVET. Residues 994 to 1003 are compositionally biased toward acidic residues; that stretch reads ESLSSDESEE. Residues 1015-1025 show a composition bias toward low complexity; it reads AALSSGLAASG. Positions 1058 to 1072 are enriched in polar residues; the sequence is VESNVSDSQNQQTIR. Basic and acidic residues-rich tracts occupy residues 1159-1168 and 1178-1205; these read AADRMREPES and KLKD…KEQS. Positions 1250–1266 are enriched in low complexity; it reads EAKSTAPAAKPTAAKTS. Over residues 1285–1301 the composition is skewed to polar residues; it reads LKSSKPLQDTTFSTANE. Composition is skewed to low complexity over residues 1308 to 1324, 1377 to 1404, and 1451 to 1464; these read AATT…GVAT, SSSS…SGSD, and PAAS…AAAT. Residues 1475-1485 show a composition bias toward polar residues; sequence TARTRQNSTNK. A compositionally biased stretch (basic and acidic residues) spans 1551–1579; it reads SPEKQTARRKSRADESPKKIPNLEHEINQ. The segment covering 1638–1650 has biased composition (acidic residues); the sequence is PVVEPEVETEIEP. Polar residues predominate over residues 1667 to 1678; the sequence is TAPTHTQLSANA. The segment covering 1691–1702 has biased composition (pro residues); it reads PAAPLPASPTPT. Residues 1722 to 1734 are compositionally biased toward basic residues; that stretch reads SRWRSRRRRRRRS. Residues 1744–1773 adopt a coiled-coil conformation; the sequence is HTQHLLNEMEMARELEEERKNELLANASKY. Positions 1753–1765 are enriched in basic and acidic residues; it reads EMARELEEERKNE. Composition is skewed to polar residues over residues 1771–1781 and 1796–1805; these read SKYSASTSSPA and DSNSANSGGD. Residues 1806–1819 show a composition bias toward low complexity; it reads QQQQQQQQPLPQQL. Positions 1823–1832 are enriched in polar residues; sequence SPSSEVASTI. The span at 1965–1984 shows a compositional bias: low complexity; that stretch reads QQQQQQQQQQQQQQQQQQQQ. 2 stretches are compositionally biased toward polar residues: residues 1985 to 1999 and 2007 to 2018; these read SCLY…SVAS and MTANSGSYANSL. Residues 2019–2033 show a composition bias toward low complexity; it reads TNTPNATPTNATMGN. The span at 2106-2118 shows a compositional bias: polar residues; sequence TAQSGAGSNSNKL. 2 stretches are compositionally biased toward low complexity: residues 2148-2157 and 2222-2242; these read SSSPSSVSES and QQQT…QQQQ. Over residues 2439–2451 the composition is skewed to pro residues; it reads PVQPQPPTPPAPA. Residues 2479–2488 are compositionally biased toward gly residues; that stretch reads GSGGSGAPGR. The span at 2658-2679 shows a compositional bias: low complexity; that stretch reads PAVSAAPVAPAPAPAANSQPPA. Positions 2891–2900 are enriched in gly residues; that stretch reads ASGGGAGTAS. A compositionally biased stretch (polar residues) spans 2909–2924; that stretch reads CSSGSNNDNNGKTGAA. Positions 2935–2946 are enriched in basic and acidic residues; that stretch reads KTLESSEDDHQT. The segment covering 3017-3026 has biased composition (basic and acidic residues); it reads DFDKGEENNK. Residues 3046 to 3065 are compositionally biased toward basic residues; that stretch reads KRPKSSKPKKDKKEKKRQKQ. Residues 3179–3198 are compositionally biased toward polar residues; sequence TSPQGLLLNSFTPHSQNANA. Residues 3268 to 3290 are compositionally biased toward low complexity; that stretch reads SASGTGSASSNSCNSNSNNNNNN. Over residues 3291-3302 the composition is skewed to gly residues; it reads GSGGGAASGGGS.

Belongs to the JADE family.

Its subcellular location is the nucleus. In terms of biological role, may function as a negative regulator of the EGFR/Ras/MAPK signaling pathway during eye development. The chain is PHD finger protein rhinoceros (rno) from Drosophila pseudoobscura pseudoobscura (Fruit fly).